The sequence spans 64 residues: Small cysteine-rich protein (64 aa).

A signal peptide spans 1–17 (FVCVQARQIDPEQILRT). Residues 18–19 (PE) constitute a propeptide that is removed on maturation.

Post-translationally, contains 4 disulfide bonds.

The protein localises to the secreted. Its subcellular location is the nematocyst. This is Small cysteine-rich protein from Anemonia viridis (Snakelocks anemone).